Consider the following 455-residue polypeptide: Major facilitator superfamily domain-containing protein 10 (455 aa).

The next 11 helical transmembrane spans lie at 27-47 (VVFL…PLLP), 86-106 (VLFG…CAPL), 113-135 (CLGR…AVWA), 148-168 (LIGG…ADLG), 176-196 (GMAV…MLGA), 202-222 (MAPW…FCFL), 275-295 (LGLV…TLSF), 310-327 (KMFF…GAYA), 336-356 (VAAV…IGWG), 359-379 (LPVL…VVPC), and 421-441 (LAGA…PFFL).

The protein belongs to the major facilitator superfamily. As to expression, expressed in luminal membrane of renal tubules (at protein level). Detected in all tissues tested with higher expression in heart, splee, kidney, leukocytes and prostate.

The protein resides in the nucleus inner membrane. It is found in the cell membrane. Its function is as follows. Probable organic anion transporter which may serve as a transporter for some non-steroidal anti-inflammatory drugs (NSAIDs) as well as other organic anions across the luminal membranes of renal proximal tubules at the final excretion step into the urine. The polypeptide is Major facilitator superfamily domain-containing protein 10 (MFSD10) (Homo sapiens (Human)).